The chain runs to 431 residues: Tol-Pal system protein TolB (431 aa).

The first 26 residues, 1-26, serve as a signal peptide directing secretion; sequence MSLMTKLGFRALVASCLIAAGSAANA. The interval 411–431 is disordered; it reads PQILSVQGGSVREPSWGPFMQ.

The protein belongs to the TolB family. In terms of assembly, the Tol-Pal system is composed of five core proteins: the inner membrane proteins TolA, TolQ and TolR, the periplasmic protein TolB and the outer membrane protein Pal. They form a network linking the inner and outer membranes and the peptidoglycan layer.

It is found in the periplasm. In terms of biological role, part of the Tol-Pal system, which plays a role in outer membrane invagination during cell division and is important for maintaining outer membrane integrity. The sequence is that of Tol-Pal system protein TolB from Burkholderia multivorans (strain ATCC 17616 / 249).